The primary structure comprises 59 residues: uncharacterized protein (59 aa).

This is an uncharacterized protein from Sulfolobus islandicus rod-shaped virus 1 (SIRV-1).